Here is a 203-residue protein sequence, read N- to C-terminus: Small ribosomal subunit protein uS4 (203 aa).

The S4 RNA-binding domain maps to 93 to 156 (QRLDNVVFRL…MKVPAILEAV (64 aa)).

This sequence belongs to the universal ribosomal protein uS4 family. In terms of assembly, part of the 30S ribosomal subunit. Contacts protein S5. The interaction surface between S4 and S5 is involved in control of translational fidelity.

Its function is as follows. One of the primary rRNA binding proteins, it binds directly to 16S rRNA where it nucleates assembly of the body of the 30S subunit. Functionally, with S5 and S12 plays an important role in translational accuracy. The polypeptide is Small ribosomal subunit protein uS4 (Lactococcus lactis subsp. lactis (strain IL1403) (Streptococcus lactis)).